Consider the following 742-residue polypeptide: MATKFPSFNQGLAQDPTTRRIWYGIATAHDFESHDGMTEEKLYQKLFSTHFGHLAIIALWVAGNLFHIAWQGNFEQFVLDPTHVRPIAHAIWDPHFGSGITEAMTQAGASGPVNIAYSGLYHWWYTIGMRTNEQLFQASIFMSILACWTLFAGWLHLQPKFRPSLAWFKNNESRLNHHLAVLFGFSSIAWTGHLVHVAIPESRGIHVGWDNWLTVLPHPAGLAPFFTLNWGAYAQNPDTLEQVFGTSEGAGTAIFTFLGGLHPQSEALWLTDIAHHHIAIGTVFIIAGHMYRNTFGIGHSLKEITEAHNTRHPLDPHKGSFGINHDGIYETVTNSLHFQLGLALAALGVATSLVAQHMGALPSYAFIARDYTTQSALYTHHQYIAMFLMVGAFAHGAIFFVRDYDPELNKDNVLARVLGTKEALISHLSWVTMILGFHTLGIYVHNDVVVAFGNPEKQILIEPVFAQFVQAAQGKMMYGFNALLSDPTSSASLAANSLPGNHYWMDLINRQDALSAFLPIGPADFLVHHAIALGLHTTALILIKGALDARGTKLIPDKKDLGYAFPCDGPGRGGTCDSSSWDAMYLAMFWALNLIAWVTFYWHWKHLAIWQGNVAQFNESGTYLMGWFRDYLWLNSAQLINGYNPFGVNSLSVWAWMFLFGHLVWATGFMFLISWRGYWQELIETLVWAHQRTPIANLVGWRDKPVALSIVQARLVGLAHFTIGNILTFGAFVIASTSGKFG.

8 helical membrane-spanning segments follow: residues 46-69, 135-158, 175-199, 273-291, 336-359, 375-401, 423-445, and 525-543; these read LFSTHFGHLAIIALWVAGNLFHIA, LFQASIFMSILACWTLFAGWLHLQ, LNHHLAVLFGFSSIAWTGHLVHVAI, IAHHHIAIGTVFIIAGHMY, LHFQLGLALAALGVATSLVAQHMG, SALYTHHQYIAMFLMVGAFAHGAIFFV, ALISHLSWVTMILGFHTLGIYVH, and FLVHHAIALGLHTTALILI. The [4Fe-4S] cluster site is built by cysteine 567 and cysteine 576. 2 helical membrane passes run 583–604 and 651–673; these read AMYLAMFWALNLIAWVTFYWHW and LSVWAWMFLFGHLVWATGFMFLI. The divinyl chlorophyll a site is built by histidine 662, methionine 670, and tyrosine 678. Tryptophan 679 contacts phylloquinone. A helical transmembrane segment spans residues 715–735; sequence LVGLAHFTIGNILTFGAFVIA.

This sequence belongs to the PsaA/PsaB family. As to quaternary structure, the PsaA/B heterodimer binds the P700 divinyl chlorophyll special pair and subsequent electron acceptors. PSI consists of a core antenna complex that captures photons, and an electron transfer chain that converts photonic excitation into a charge separation. The cyanobacterial PSI reaction center is composed of one copy each of PsaA,B,C,D,E,F,I,J,K,L,M and X, and forms trimeric complexes. The cofactor is PSI electron transfer chain: 5 divinyl chlorophyll a, 1 divinyl chlorophyll a', 2 phylloquinones and 3 4Fe-4S clusters. PSI core antenna: 90 divinyl chlorophyll a, 22 carotenoids, 3 phospholipids and 1 galactolipid. P700 is a divinyl chlorophyll a/divinyl chlorophyll a' dimer, A0 is one or more divinyl chlorophyll a, A1 is one or both phylloquinones and FX is a shared 4Fe-4S iron-sulfur center..

It is found in the cellular thylakoid membrane. It carries out the reaction reduced [plastocyanin] + hnu + oxidized [2Fe-2S]-[ferredoxin] = oxidized [plastocyanin] + reduced [2Fe-2S]-[ferredoxin]. Functionally, psaA and PsaB bind P700, the primary electron donor of photosystem I (PSI), as well as the electron acceptors A0, A1 and FX. PSI is a plastocyanin/cytochrome c6-ferredoxin oxidoreductase, converting photonic excitation into a charge separation, which transfers an electron from the donor P700 chlorophyll pair to the spectroscopically characterized acceptors A0, A1, FX, FA and FB in turn. Oxidized P700 is reduced on the lumenal side of the thylakoid membrane by plastocyanin or cytochrome c6. The sequence is that of Photosystem I P700 chlorophyll a apoprotein A2 from Prochlorococcus marinus subsp. pastoris (strain CCMP1986 / NIES-2087 / MED4).